Here is a 192-residue protein sequence, read N- to C-terminus: Peptidyl-tRNA hydrolase (192 aa).

Tyr-14 is a binding site for tRNA. His-19 (proton acceptor) is an active-site residue. TRNA is bound by residues Tyr-64, Asn-66, and Asn-112.

It belongs to the PTH family. As to quaternary structure, monomer.

Its subcellular location is the cytoplasm. It catalyses the reaction an N-acyl-L-alpha-aminoacyl-tRNA + H2O = an N-acyl-L-amino acid + a tRNA + H(+). Hydrolyzes ribosome-free peptidyl-tRNAs (with 1 or more amino acids incorporated), which drop off the ribosome during protein synthesis, or as a result of ribosome stalling. Functionally, catalyzes the release of premature peptidyl moieties from peptidyl-tRNA molecules trapped in stalled 50S ribosomal subunits, and thus maintains levels of free tRNAs and 50S ribosomes. In Prosthecochloris aestuarii (strain DSM 271 / SK 413), this protein is Peptidyl-tRNA hydrolase.